A 484-amino-acid polypeptide reads, in one-letter code: Monocarboxylate transporter 2 (484 aa).

The Cytoplasmic portion of the chain corresponds to 1–16 (MPSETAVPPPHPIPPD). The helical transmembrane segment at 17–37 (GGWGWVVVGAAFISIGFSYAF) threads the bilayer. The Extracellular portion of the chain corresponds to 38 to 60 (PKAVTVFFKDIQQIFQASYSEIA). Residues 61-81 (WISSIMLAVMYAGGPISSVLV) form a helical membrane-spanning segment. Topologically, residues 82-87 (NNYGSR) are cytoplasmic. Residues 88 to 108 (PVVIIGGLLCCTGMILASFSN) form a helical membrane-spanning segment. At 109–116 (SVLELYLT) the chain is on the extracellular side. A helical transmembrane segment spans residues 117 to 137 (IGFIGGLGLAFNLQPALTIIG). At 138 to 144 (KYFYRRR) the chain is on the cytoplasmic side. The chain crosses the membrane as a helical span at residues 145–165 (PMANGLAMAGSPVFLSSLAPF). Over 166 to 174 (NQYLFNSYG) the chain is Extracellular. The helical transmembrane segment at 175 to 195 (WKGSFLILGGIFLHSCVAGCL) threads the bilayer. The Cytoplasmic portion of the chain corresponds to 196-245 (MRPVQTSPRKSKSKSKVGSRQDGSMKKASKVSTAEKINRFLDFSLFKHRG). Positions 201–224 (TSPRKSKSKSKVGSRQDGSMKKAS) are disordered. Residues 246-266 (FLIYLSGNVIMFLGFFAPIIF) form a helical membrane-spanning segment. At 267-282 (LAPYAKDKGVDEYNAA) the chain is on the extracellular side. A helical transmembrane segment spans residues 283–303 (LLLSVMAFVDMFARPTGGLIA). Residues 304–311 (NSKLIRPR) are Cytoplasmic-facing. A helical transmembrane segment spans residues 312-332 (IQYFFSFAIVFTGICHLLCPL). The Extracellular segment spans residues 333–337 (ADTYP). The helical transmembrane segment at 338 to 358 (ALVVYSIFFGYGFGSVSSVLF) threads the bilayer. The Cytoplasmic segment spans residues 359–372 (ETLMDLVGPARFSS). A helical transmembrane segment spans residues 373–393 (AVGLATIVECCPVLLGPPLAG). Over 394–405 (KLVDKTKDYKYM) the chain is Extracellular. The chain crosses the membrane as a helical span at residues 406–426 (YIASGTIVVISGIYLFIGNAI). The Cytoplasmic portion of the chain corresponds to 427-484 (NYRLLAKERKREKARKKKSATHPSRESEALSRSKQDDVSVKVSNPHNSPSDRERESNI). The interval 437-484 (REKARKKKSATHPSRESEALSRSKQDDVSVKVSNPHNSPSDRERESNI) is disordered. Composition is skewed to basic and acidic residues over residues 449-465 (PSRE…DDVS) and 475-484 (PSDRERESNI).

It belongs to the major facilitator superfamily. Monocarboxylate porter (TC 2.A.1.13) family. In terms of assembly, homodimer. Interacts with GRID2IP. Interacts with EMB; interaction mediates SLC16A7 targeting to the plasma membrane. Interacts with isoform 2 of BSG. As to expression, abundant on the surface of hepatocytes. Present on parietal cells of the oxyntic gland of the stomach, on the basolateral surface of epithelial cells in the collecting ducts of the kidney, on sperm tails throughout the epididymis. Expressed in mitochondria-rich skeletal muscle fibers and cardiac myocytes (at protein level).

It is found in the cell membrane. Its subcellular location is the basolateral cell membrane. The protein localises to the cytoplasm. The catalysed reaction is pyruvate(out) + H(+)(out) = pyruvate(in) + H(+)(in). It catalyses the reaction 3-methyl-2-oxobutanoate(out) + H(+)(out) = 3-methyl-2-oxobutanoate(in) + H(+)(in). It carries out the reaction (S)-lactate(in) + H(+)(in) = (S)-lactate(out) + H(+)(out). The enzyme catalyses acetoacetate(out) + H(+)(out) = acetoacetate(in) + H(+)(in). The catalysed reaction is (R)-3-hydroxybutanoate(out) + H(+)(out) = (R)-3-hydroxybutanoate(in) + H(+)(in). It catalyses the reaction 4-methyl-2-oxopentanoate(out) + H(+)(out) = 4-methyl-2-oxopentanoate(in) + H(+)(in). It carries out the reaction (S)-3-hydroxybutanoate(out) + H(+)(out) = (S)-3-hydroxybutanoate(in) + H(+)(in). Transport activity exhibits steep dependence on substrate concentration. Substrate concentration sensitivity of SLC16A7 arises from the strong inter-subunit cooperativity of the SLC16A7 dimer during transport. Inhibited by AR-C155858. In terms of biological role, proton-coupled monocarboxylate symporter. Catalyzes the rapid transport across the plasma membrane of monocarboxylates such as L-lactate, pyruvate and ketone bodies, acetoacetate, beta-hydroxybutyrate and acetate. Dimerization is functionally required and both subunits work cooperatively in transporting substrate. In Mesocricetus auratus (Golden hamster), this protein is Monocarboxylate transporter 2 (SLC16A7).